Here is a 104-residue protein sequence, read N- to C-terminus: MMLKPSIDTLLDKVPSKYSLVILQAKRAHELEAGEKATQDFKSVKSTLRALEEIESGNVVIHPDPSAKRASVRARIEAERLAKEEEERKIKEQIAKEKEDGEKI.

Belongs to the RNA polymerase subunit omega family. The RNAP catalytic core consists of 2 alpha, 1 beta, 1 beta' and 1 omega subunit. When a sigma factor is associated with the core the holoenzyme is formed, which can initiate transcription.

The catalysed reaction is RNA(n) + a ribonucleoside 5'-triphosphate = RNA(n+1) + diphosphate. Functionally, promotes RNA polymerase assembly. Latches the N- and C-terminal regions of the beta' subunit thereby facilitating its interaction with the beta and alpha subunits. This chain is DNA-directed RNA polymerase subunit omega, found in Streptococcus agalactiae serotype Ia (strain ATCC 27591 / A909 / CDC SS700).